The chain runs to 284 residues: RAD52 motif-containing protein 1 (284 aa).

A necessary for nuclear localization and for nucleolar accumulation in response to heat shock region spans residues 1-92 (MAELVPFAVP…KQLFQKSPVK (92 aa)). Positions 15-98 (KTLLVWELSS…SPVKVRLGTR (84 aa)) constitute an RRM domain. The interval 90-133 (PVKVRLGTRHKAVQHQALALNSSKCQELANYYFGFNGCSKRIIK) is necessary for nuclear and nucleolar localization.

In terms of assembly, homodimer. As to expression, expressed in testis.

Its subcellular location is the nucleus. The protein resides in the cytoplasm. It localises to the nucleolus. The protein localises to the PML body. It is found in the cajal body. Its function is as follows. May confer resistance to the antitumor agent cisplatin. Binds to DNA and RNA. This Homo sapiens (Human) protein is RAD52 motif-containing protein 1 (RDM1).